The sequence spans 97 residues: MALTKADIAETLSDKFGFNKRESKELVEQFYDEMSEVLVKGEQIKLSGFGNFELKDKSARPGRNPRTGEDVPISARRVVTFKPGQKLRAQIDNYGTA.

This sequence belongs to the bacterial histone-like protein family. As to quaternary structure, heterodimer of an alpha and a beta chain.

Its function is as follows. This protein is one of the two subunits of integration host factor, a specific DNA-binding protein that functions in genetic recombination as well as in transcriptional and translational control. In Hydrogenovibrio crunogenus (strain DSM 25203 / XCL-2) (Thiomicrospira crunogena), this protein is Integration host factor subunit alpha.